The chain runs to 372 residues: N-methyl-L-tryptophan oxidase (372 aa).

FAD is bound at residue 4–34 (DLIIIGSGSVGAAAGYYATRAGLNVLMTDAH). The residue at position 308 (Cys-308) is an S-8alpha-FAD cysteine.

Belongs to the MSOX/MTOX family. MTOX subfamily. In terms of assembly, monomer. FAD serves as cofactor.

It carries out the reaction N(alpha)-methyl-L-tryptophan + O2 + H2O = L-tryptophan + formaldehyde + H2O2. Functionally, catalyzes the oxidative demethylation of N-methyl-L-tryptophan. This chain is N-methyl-L-tryptophan oxidase, found in Shigella boydii serotype 18 (strain CDC 3083-94 / BS512).